We begin with the raw amino-acid sequence, 108 residues long: Large ribosomal subunit protein uL23 (108 aa).

It belongs to the universal ribosomal protein uL23 family. In terms of assembly, part of the 50S ribosomal subunit. Contacts protein L29, and trigger factor when it is bound to the ribosome.

In terms of biological role, one of the early assembly proteins it binds 23S rRNA. One of the proteins that surrounds the polypeptide exit tunnel on the outside of the ribosome. Forms the main docking site for trigger factor binding to the ribosome. The sequence is that of Large ribosomal subunit protein uL23 from Mycoplasmoides gallisepticum (strain R(low / passage 15 / clone 2)) (Mycoplasma gallisepticum).